The chain runs to 126 residues: Protein ApaG (126 aa).

The ApaG domain occupies 2–126 (TSLEDSIKVE…FRLAVPGMLH (125 aa)).

This Shewanella sediminis (strain HAW-EB3) protein is Protein ApaG.